The chain runs to 427 residues: Septin-8-A (427 aa).

The region spanning 39 to 305 (QGFCFNILCV…ELYRRCKLEE (267 aa)) is the Septin-type G domain. The tract at residues 49-56 (GETGIGKS) is G1 motif. GTP contacts are provided by residues 49–56 (GETGIGKS), G104, 185–193 (KADTISKSE), G239, and R254. The tract at residues 101 to 104 (DTVG) is G3 motif. The interval 184–187 (AKAD) is G4 motif. A coiled-coil region spans residues 320–409 (LQETYEAKRK…KAAMEALQSQ (90 aa)). Residues 376 to 389 (QEESKKVEDKRRDL) show a composition bias toward basic and acidic residues. The segment at 376-427 (QEESKKVEDKRRDLEEEMNSFNRRKAAMEALQSQSFQATSQQPLKKDKDRKN) is disordered. Polar residues predominate over residues 406–418 (LQSQSFQATSQQP).

It belongs to the TRAFAC class TrmE-Era-EngA-EngB-Septin-like GTPase superfamily. Septin GTPase family.

This is Septin-8-A (sept8-a) from Xenopus laevis (African clawed frog).